The primary structure comprises 59 residues: UPF0434 protein VIBHAR_01537 (59 aa).

Belongs to the UPF0434 family.

This Vibrio campbellii (strain ATCC BAA-1116) protein is UPF0434 protein VIBHAR_01537.